The following is a 170-amino-acid chain: MNFTLLATEGFGLNFNLFETNILNWAVVIFGLYKFLPSFLGKMLQKRREGILLELKDAEDRLLNATQALEKAKKDLSSAEEKASQIKADSLKRSESIRMESEKKAIEEMARIKQSAISDESSEASRAISQLRKEAIELAIKKALDSLPNRLDQTKQENLVTQSINNIEEN.

Residues 15–37 (FNLFETNILNWAVVIFGLYKFLP) traverse the membrane as a helical segment. Residues 72 to 98 (AKKDLSSAEEKASQIKADSLKRSESIR) are disordered.

It belongs to the ATPase B chain family. As to quaternary structure, F-type ATPases have 2 components, F(1) - the catalytic core - and F(0) - the membrane proton channel. F(1) has five subunits: alpha(3), beta(3), gamma(1), delta(1), epsilon(1). F(0) has four main subunits: a(1), b(1), b'(1) and c(10-14). The alpha and beta chains form an alternating ring which encloses part of the gamma chain. F(1) is attached to F(0) by a central stalk formed by the gamma and epsilon chains, while a peripheral stalk is formed by the delta, b and b' chains.

Its subcellular location is the cellular thylakoid membrane. F(1)F(0) ATP synthase produces ATP from ADP in the presence of a proton or sodium gradient. F-type ATPases consist of two structural domains, F(1) containing the extramembraneous catalytic core and F(0) containing the membrane proton channel, linked together by a central stalk and a peripheral stalk. During catalysis, ATP synthesis in the catalytic domain of F(1) is coupled via a rotary mechanism of the central stalk subunits to proton translocation. Its function is as follows. Component of the F(0) channel, it forms part of the peripheral stalk, linking F(1) to F(0). The polypeptide is ATP synthase subunit b (Prochlorococcus marinus (strain MIT 9215)).